A 702-amino-acid polypeptide reads, in one-letter code: MASAAPASRGAARASTAARDAPFAAAARGPGRFRRDGNGRNRLVAVRAPRRWTTRAAATSGDANVVIKPKKERAKVDPNAVLQVPPSQIRNFSIIAHIDHGKSTLADTLLSKTKTVAARDMEAQLLDSMDIERERGITIKLNSARMNYVANDGETYVLNLIDTPGHVDFSYEVSRSLAACEGALLVVDASQGVEAQTVANVYLALENDLEIITVLNKIDLPGAEPERVKVRSIHWFPYDRVGVREIEDVLGLDTEDAVVASAKANIGMEDILENIVKMIPPPPDTGDEPLRALIFDSYFDPYRGVVVIFRVVDGNLGVGDAVKFMNTGKSYTIDEIGIMRPQKVPVNRLSAGEVGYMIANIKSVADARVGDTITTTKDSSTEPLPGYSEATPMVYCGLFPTDSDQYEDLRVALGKLQINDAALRYEPEQSSAMGFGFRCGFLGLLHMEIVQERLEREYDLGLITTAPSVVYKVYTSDGACVDIANPADLPDASVRDRIEEPFVKLEMFAPSDYVGSLMELAQQRRGEFIDMTYLSESRTCLKYDIPLGEVVTDFFDELKSRSKGYASMEYSFNEYRKSDLVRLDVLINYEPADPLACICHRDKSYVMGRGLVDKLKELIPRQMFRIPIQASIGTKVIASTSISAMRKDVLAKCYGGDISRKKKLLKKQAAGKKRMKQFGKVEVPQEAFMAVLKVDQNAGSGG.

Over residues 1-30 (MASAAPASRGAARASTAARDAPFAAAARGP) the composition is skewed to low complexity. The tract at residues 1 to 41 (MASAAPASRGAARASTAARDAPFAAAARGPGRFRRDGNGRN) is disordered. The tr-type G domain maps to 87 to 283 (SQIRNFSIIA…NIVKMIPPPP (197 aa)). GTP contacts are provided by residues 96–103 (AHIDHGKS), 162–166 (DTPGH), and 216–219 (NKID).

It belongs to the TRAFAC class translation factor GTPase superfamily. Classic translation factor GTPase family. LepA subfamily.

It localises to the plastid. Its subcellular location is the chloroplast. It carries out the reaction GTP + H2O = GDP + phosphate + H(+). In terms of biological role, promotes chloroplast protein synthesis. May act as a fidelity factor of the translation reaction, by catalyzing a one-codon backward translocation of tRNAs on improperly translocated ribosomes. The polypeptide is Translation factor GUF1 homolog, chloroplastic (Micromonas pusilla (strain CCMP1545) (Picoplanktonic green alga)).